The chain runs to 209 residues: Large ribosomal subunit protein uL1 (209 aa).

Belongs to the universal ribosomal protein uL1 family. Part of the 50S ribosomal subunit.

In terms of biological role, binds directly to 23S rRNA. The L1 stalk is quite mobile in the ribosome, and is involved in E site tRNA release. Protein L1 is also a translational repressor protein, it controls the translation of the L11 operon by binding to its mRNA. The protein is Large ribosomal subunit protein uL1 (rplA) of Neorickettsia sennetsu (strain ATCC VR-367 / Miyayama) (Ehrlichia sennetsu).